Here is a 377-residue protein sequence, read N- to C-terminus: tRNA/tmRNA (uracil-C(5))-methyltransferase (377 aa).

Positions 199, 227, 232, 248, and 308 each coordinate S-adenosyl-L-methionine. Residue C333 is the Nucleophile of the active site. The Proton acceptor role is filled by E367.

The protein belongs to the class I-like SAM-binding methyltransferase superfamily. RNA M5U methyltransferase family. TrmA subfamily.

The enzyme catalyses uridine(54) in tRNA + S-adenosyl-L-methionine = 5-methyluridine(54) in tRNA + S-adenosyl-L-homocysteine + H(+). The catalysed reaction is uridine(341) in tmRNA + S-adenosyl-L-methionine = 5-methyluridine(341) in tmRNA + S-adenosyl-L-homocysteine + H(+). In terms of biological role, dual-specificity methyltransferase that catalyzes the formation of 5-methyluridine at position 54 (m5U54) in all tRNAs, and that of position 341 (m5U341) in tmRNA (transfer-mRNA). The protein is tRNA/tmRNA (uracil-C(5))-methyltransferase of Aeromonas hydrophila subsp. hydrophila (strain ATCC 7966 / DSM 30187 / BCRC 13018 / CCUG 14551 / JCM 1027 / KCTC 2358 / NCIMB 9240 / NCTC 8049).